The sequence spans 389 residues: Acetate kinase (389 aa).

Asn-7 provides a ligand contact to Mg(2+). Lys-14 serves as a coordination point for ATP. Position 88 (Arg-88) interacts with substrate. Asp-145 functions as the Proton donor/acceptor in the catalytic mechanism. Residues 205-209, 279-281, and 324-328 each bind ATP; these read HLGNG, DLR, and GIGEN. Glu-375 is a binding site for Mg(2+).

Belongs to the acetokinase family. In terms of assembly, homodimer. Requires Mg(2+) as cofactor. It depends on Mn(2+) as a cofactor.

Its subcellular location is the cytoplasm. It carries out the reaction acetate + ATP = acetyl phosphate + ADP. It functions in the pathway metabolic intermediate biosynthesis; acetyl-CoA biosynthesis; acetyl-CoA from acetate: step 1/2. Catalyzes the formation of acetyl phosphate from acetate and ATP. Can also catalyze the reverse reaction. The sequence is that of Acetate kinase from Sulfurimonas denitrificans (strain ATCC 33889 / DSM 1251) (Thiomicrospira denitrificans (strain ATCC 33889 / DSM 1251)).